The following is a 236-amino-acid chain: Syntaxin-8 (236 aa).

Over 1 to 215 the chain is Cytoplasmic; that stretch reads MAPDPWFSTY…MVDRKSASCG (215 aa). Residues 42-65 are a coiled coil; it reads VTIRALLQNLKEKIALLKDLLLRA. In terms of domain architecture, t-SNARE coiled-coil homology spans 145-207; it reads QKIIQEQDAG…RNETRRVNMV (63 aa). At S160 the chain carries Phosphoserine. The helical; Anchor for type IV membrane protein transmembrane segment at 216-232 threads the bilayer; that stretch reads MIMVILLLLVAIVVVAV. Residues 233–236 are Vesicular-facing; sequence WPTN.

It belongs to the syntaxin family. In terms of assembly, forms a SNARE complex with STX7, VTI1B and VAMP8 which functions in the homotypic fusion of late endosomes. Part of the SNARE core complex containing STX7, VAMP8 and VTI1B. Interacts with VAMP8. Interacts with HECTD3. Interacts with TPC1. Ubiquitinated by HECTD3. Highly expressed in heart. Also found in brain, kidney, liver, lung, placenta, skeletal muscle, spleen and pancreas.

The protein resides in the membrane. Vesicle trafficking protein that functions in the early secretory pathway, possibly by mediating retrograde transport from cis-Golgi membranes to the ER. This Homo sapiens (Human) protein is Syntaxin-8 (STX8).